The chain runs to 238 residues: Sugar fermentation stimulation protein homolog (238 aa).

This sequence belongs to the SfsA family.

The polypeptide is Sugar fermentation stimulation protein homolog (Klebsiella pneumoniae subsp. pneumoniae (strain ATCC 700721 / MGH 78578)).